Reading from the N-terminus, the 353-residue chain is tRNA N6-adenosine threonylcarbamoyltransferase (353 aa).

Positions 109 and 113 each coordinate Fe cation. Substrate is bound by residues 136–140 (TVSGG), Asp169, Gly182, Asp186, and Asn284. A Fe cation-binding site is contributed by Asp312.

It belongs to the KAE1 / TsaD family. Fe(2+) serves as cofactor.

It is found in the cytoplasm. The catalysed reaction is L-threonylcarbamoyladenylate + adenosine(37) in tRNA = N(6)-L-threonylcarbamoyladenosine(37) in tRNA + AMP + H(+). Functionally, required for the formation of a threonylcarbamoyl group on adenosine at position 37 (t(6)A37) in tRNAs that read codons beginning with adenine. Is involved in the transfer of the threonylcarbamoyl moiety of threonylcarbamoyl-AMP (TC-AMP) to the N6 group of A37, together with TsaE and TsaB. TsaD likely plays a direct catalytic role in this reaction. This chain is tRNA N6-adenosine threonylcarbamoyltransferase, found in Chlorobium limicola (strain DSM 245 / NBRC 103803 / 6330).